We begin with the raw amino-acid sequence, 441 residues long: ATP-dependent RNA helicase RhlB (441 aa).

The Q motif motif lies at 9-37 (QKFADFSLNKEIKTALNESGFEFCTPIQA). The Helicase ATP-binding domain maps to 40 to 219 (LPILLQKKDI…YDHMNEPEKV (180 aa)). Position 53–60 (53–60 (AQTGTGKT)) interacts with ATP. A DEAD box motif is present at residues 165–168 (DEAD). The Helicase C-terminal domain occupies 243–390 (KMRLLLSLIE…VTNYDSEGLL (148 aa)). The disordered stretch occupies residues 401–441 (RKHNNRPQQGRNNSGRPQGRNGNRAGGRNGPRRHDQVRRHS).

The protein belongs to the DEAD box helicase family. RhlB subfamily. As to quaternary structure, component of the RNA degradosome, which is a multiprotein complex involved in RNA processing and mRNA degradation.

The protein resides in the cytoplasm. It catalyses the reaction ATP + H2O = ADP + phosphate + H(+). In terms of biological role, DEAD-box RNA helicase involved in RNA degradation. Has RNA-dependent ATPase activity and unwinds double-stranded RNA. In Shewanella woodyi (strain ATCC 51908 / MS32), this protein is ATP-dependent RNA helicase RhlB.